A 549-amino-acid chain; its full sequence is 4-hydroxybutyrate--CoA ligase 2 (549 aa).

ATP contacts are provided by residues T195–K203, E336–H341, D425, and R440. CoA contacts are provided by residues G448–E450, K506, and C514–K516. K530 is an ATP binding site.

This sequence belongs to the ATP-dependent AMP-binding enzyme family. Requires Mg(2+) as cofactor. Mn(2+) is required as a cofactor.

It carries out the reaction 4-hydroxybutanoate + ATP + CoA = 4-hydroxybutanoyl-CoA + AMP + diphosphate. The catalysed reaction is acetate + ATP + CoA = acetyl-CoA + AMP + diphosphate. It catalyses the reaction propanoate + ATP + CoA = propanoyl-CoA + AMP + diphosphate. The enzyme catalyses a medium-chain fatty acid + ATP + CoA = a medium-chain fatty acyl-CoA + AMP + diphosphate. Its function is as follows. Catalyzes the ligation of coenzyme A (CoA) to 4-hydroxybutyrate (4HB). It can also use butyrate, valerate, propionate, acetate and 3-hydroxybutyrate (3HB) as substrates. The chain is 4-hydroxybutyrate--CoA ligase 2 from Metallosphaera sedula (strain ATCC 51363 / DSM 5348 / JCM 9185 / NBRC 15509 / TH2).